The sequence spans 609 residues: DNA polymerase alpha subunit B (609 aa).

Position 155 is a phosphoserine (serine 155). Threonine 164 carries the phosphothreonine modification. A phosphoserine mark is found at serine 166 and serine 168.

It belongs to the DNA polymerase alpha subunit B family. Component of the alpha DNA polymerase complex (also known as the alpha DNA polymerase-primase complex) consisting of four subunits: the catalytic subunit PolA1, the regulatory subunit PolA2, and the primase complex subunits Prim1 and Prim2 respectively. PolA1 associates with the DNA primase complex before association with PolA2. Phosphorylated in embryos until cycle 13. In terms of tissue distribution, expressed in embryos (at protein level).

It is found in the nucleus. Its function is as follows. Accessory subunit of the DNA polymerase alpha complex (also known as the alpha DNA polymerase-primase complex) which plays an essential role in the initiation of DNA synthesis. During the S phase of the cell cycle, the DNA polymerase alpha complex (composed of a catalytic subunit PolA1, an accessory subunit PolA2 and two primase subunits, the catalytic subunit Prim1 and the regulatory subunit Prim2) is recruited to DNA at the replicative forks. The primase subunit of the polymerase alpha complex initiates DNA synthesis by oligomerising short RNA primers on both leading and lagging strands. These primers are initially extended by the polymerase alpha catalytic subunit and subsequently transferred to polymerase delta and polymerase epsilon for processive synthesis on the lagging and leading strand, respectively. The chain is DNA polymerase alpha subunit B from Drosophila melanogaster (Fruit fly).